Reading from the N-terminus, the 297-residue chain is tRNA pseudouridine synthase B (297 aa).

Asp41 (nucleophile) is an active-site residue.

It belongs to the pseudouridine synthase TruB family. Type 1 subfamily.

The enzyme catalyses uridine(55) in tRNA = pseudouridine(55) in tRNA. In terms of biological role, responsible for synthesis of pseudouridine from uracil-55 in the psi GC loop of transfer RNAs. The chain is tRNA pseudouridine synthase B from Synechococcus sp. (strain CC9311).